A 486-amino-acid chain; its full sequence is NADH-quinone oxidoreductase subunit N (486 aa).

A run of 14 helical transmembrane segments spans residues 14–34 (SIAP…LNFI), 45–65 (MLAI…SGIV), 77–97 (FAFI…PLTL), 105–125 (CSLA…EFMV), 130–150 (LIVI…LIAL), 163–183 (YFTM…IFYL), 203–223 (ILIA…LSLI), 237–257 (SEVM…IVAM), 268–288 (IAFI…LANI), 299–319 (MLAF…VIGT), 326–346 (LFLY…VLWF), 377–397 (FLMA…VFWG), 409–429 (GFIF…YYYL), and 459–479 (FIIT…KFWT).

It belongs to the complex I subunit 2 family. NDH-1 is composed of 14 different subunits. Subunits NuoA, H, J, K, L, M, N constitute the membrane sector of the complex.

It is found in the cell inner membrane. The catalysed reaction is a quinone + NADH + 5 H(+)(in) = a quinol + NAD(+) + 4 H(+)(out). Its function is as follows. NDH-1 shuttles electrons from NADH, via FMN and iron-sulfur (Fe-S) centers, to quinones in the respiratory chain. The immediate electron acceptor for the enzyme in this species is believed to be ubiquinone. Couples the redox reaction to proton translocation (for every two electrons transferred, four hydrogen ions are translocated across the cytoplasmic membrane), and thus conserves the redox energy in a proton gradient. The sequence is that of NADH-quinone oxidoreductase subunit N from Campylobacter hominis (strain ATCC BAA-381 / DSM 21671 / CCUG 45161 / LMG 19568 / NCTC 13146 / CH001A).